Reading from the N-terminus, the 323-residue chain is Transmembrane protein 59 (323 aa).

The N-terminal stretch at 1 to 35 (MAAPKGSLWVRTQLGLPPLLLLTMALAGGSGTASA) is a signal peptide. Residues 36-238 (EAFDSVLGDT…GFLRCLSLNS (203 aa)) are Extracellular-facing. Asparagine 90 carries N-linked (GlcNAc...) asparagine glycosylation. The chain crosses the membrane as a helical span at residues 239–259 (GWILTTTLVLSVMVLLWICCA). Topologically, residues 260-323 (TVATAVEQYV…TKVNLAHSEI (64 aa)) are cytoplasmic. The ATG16L1-binding motif signature appears at 263-281 (TAVEQYVPSEKLSIYGDLE). Phosphothreonine is present on threonine 303.

The protein belongs to the TMEM59 family. In terms of assembly, interacts with ATG16L1 (via WD repeats). N-glycosylated.

The protein localises to the late endosome membrane. It is found in the lysosome membrane. The protein resides in the cell membrane. It localises to the golgi apparatus membrane. Its function is as follows. Acts as a regulator of autophagy in response to S.aureus infection by promoting activation of LC3 (MAP1LC3A, MAP1LC3B or MAP1LC3C). Acts by interacting with ATG16L1, leading to promote a functional complex between LC3 and ATG16L1 and promoting LC3 lipidation and subsequent activation of autophagy. Modulates the O-glycosylation and complex N-glycosylation steps occurring during the Golgi maturation of several proteins such as APP, BACE1, SEAP or PRNP. Inhibits APP transport to the cell surface and further shedding. This is Transmembrane protein 59 (TMEM59) from Homo sapiens (Human).